We begin with the raw amino-acid sequence, 367 residues long: Protein pxr1 (367 aa).

Disordered stretches follow at residues 1–28 and 156–336; these read MGLS…TDSF and KALK…PMGI. Residues 15–27 are compositionally biased toward polar residues; sequence DPNNTKWSGNTDS. The region spanning 25–79 is the G-patch domain; sequence TDSFGHRMMKSQGWTPGEYLGAKDAAHAEFHTAANASHIRVVIKDNNLGLGAKIG. A compositionally biased stretch (acidic residues) spans 167 to 182; it reads SSDDSDSSSDEEEEEK. Composition is skewed to basic residues over residues 209–221, 236–248, and 265–277; these read SKKS…SKKR, KSKK…KSKS, and KARK…KKRR. Positions 282–296 are enriched in low complexity; it reads ATAGADTEETSSTSK. A compositionally biased stretch (basic residues) spans 297–309; that stretch reads SSKKNSKKDKHKS. Residues 310–328 show a composition bias toward low complexity; sequence SSASESSTKESTPTVTESS.

This sequence belongs to the PINX1 family.

It localises to the nucleus. It is found in the nucleolus. Its function is as follows. Involved in rRNA-processing at A0, A1 and A2 sites and negatively regulates telomerase. The protein is Protein pxr1 (pxr1) of Sclerotinia sclerotiorum (strain ATCC 18683 / 1980 / Ss-1) (White mold).